We begin with the raw amino-acid sequence, 414 residues long: Gamma-glutamyl phosphate reductase (414 aa).

It belongs to the gamma-glutamyl phosphate reductase family.

The protein localises to the cytoplasm. It catalyses the reaction L-glutamate 5-semialdehyde + phosphate + NADP(+) = L-glutamyl 5-phosphate + NADPH + H(+). Its pathway is amino-acid biosynthesis; L-proline biosynthesis; L-glutamate 5-semialdehyde from L-glutamate: step 2/2. Its function is as follows. Catalyzes the NADPH-dependent reduction of L-glutamate 5-phosphate into L-glutamate 5-semialdehyde and phosphate. The product spontaneously undergoes cyclization to form 1-pyrroline-5-carboxylate. The polypeptide is Gamma-glutamyl phosphate reductase (Clostridium botulinum (strain Eklund 17B / Type B)).